The chain runs to 208 residues: Na(+)-translocating NADH-quinone reductase subunit D (208 aa).

Helical transmembrane passes span 42-62, 72-92, 103-123, 131-151, and 178-198; these read FVMA…VSLI, IIVQ…ILKA, VFVG…AFAM, FVDG…VAFF, and NGLF…IWGL.

Belongs to the NqrDE/RnfAE family. As to quaternary structure, composed of six subunits; NqrA, NqrB, NqrC, NqrD, NqrE and NqrF.

It localises to the cell inner membrane. It carries out the reaction a ubiquinone + n Na(+)(in) + NADH + H(+) = a ubiquinol + n Na(+)(out) + NAD(+). Functionally, NQR complex catalyzes the reduction of ubiquinone-1 to ubiquinol by two successive reactions, coupled with the transport of Na(+) ions from the cytoplasm to the periplasm. NqrA to NqrE are probably involved in the second step, the conversion of ubisemiquinone to ubiquinol. The protein is Na(+)-translocating NADH-quinone reductase subunit D of Haemophilus influenzae (strain 86-028NP).